The chain runs to 445 residues: Exodeoxyribonuclease 7 large subunit (445 aa).

It belongs to the XseA family. As to quaternary structure, heterooligomer composed of large and small subunits.

The protein resides in the cytoplasm. It catalyses the reaction Exonucleolytic cleavage in either 5'- to 3'- or 3'- to 5'-direction to yield nucleoside 5'-phosphates.. Functionally, bidirectionally degrades single-stranded DNA into large acid-insoluble oligonucleotides, which are then degraded further into small acid-soluble oligonucleotides. This chain is Exodeoxyribonuclease 7 large subunit, found in Staphylococcus aureus (strain bovine RF122 / ET3-1).